The following is a 91-amino-acid chain: Phosphocarrier protein NPr (91 aa).

One can recognise an HPr domain in the interval 3–90 (KLERQVTICN…ALVDAKFDEA (88 aa)). Residue H17 is the Pros-phosphohistidine intermediate of the active site.

This sequence belongs to the HPr family.

The protein resides in the cytoplasm. Functionally, component of the phosphoenolpyruvate-dependent nitrogen-metabolic phosphotransferase system (nitrogen-metabolic PTS), that seems to be involved in regulating nitrogen metabolism. The phosphoryl group from phosphoenolpyruvate (PEP) is transferred to the phosphoryl carrier protein NPr by enzyme I-Ntr. Phospho-NPr then transfers it to EIIA-Ntr. Could function in the transcriptional regulation of sigma-54 dependent operons in conjunction with the NPr (PtsO) and EIIA-Ntr (PtsN) proteins. In Shewanella violacea (strain JCM 10179 / CIP 106290 / LMG 19151 / DSS12), this protein is Phosphocarrier protein NPr (ptsO).